The sequence spans 607 residues: CUB and zona pellucida-like domain-containing protein 1 (607 aa).

The signal sequence occupies residues 1-24; the sequence is MELVRRLMPLTLLILSCLAELTMA. A disulfide bridge connects residues cysteine 17 and cysteine 58. CUB domains lie at 25–146 and 154–265; these read EAEG…YFFS and CGGY…YTSI. Residues 25–568 lie on the Lumenal side of the membrane; the sequence is EAEGNASCTV…EETPNQPFNS (544 aa). Asparagine 29, asparagine 57, and asparagine 67 each carry an N-linked (GlcNAc...) asparagine glycan. Cystine bridges form between cysteine 85/cysteine 107, cysteine 154/cysteine 180, and cysteine 207/cysteine 229. The region spanning 276 to 519 is the ZP domain; that stretch reads TCSSDRMRVI…SRCNQGCVSR (244 aa). N-linked (GlcNAc...) asparagine glycosylation is found at asparagine 394 and asparagine 419. Cysteine 442 and cysteine 498 form a disulfide bridge. A helical transmembrane segment spans residues 569–589; the sequence is VHLFSFMVLALNVVTVATITV. The Cytoplasmic portion of the chain corresponds to 590-607; the sequence is RHFVNQRADYKYQKLQNY.

In terms of tissue distribution, detected in pancreas and epithelium of ovary. Expressed at higher levels in ovarian tumors than in normal tissue.

The protein localises to the zymogen granule membrane. In terms of biological role, localized to zymogen granules, where it functions in trypsinogen activation. May indirectly regulate cell motility, cell-cell and cell/extracellular matrix interactions. In Homo sapiens (Human), this protein is CUB and zona pellucida-like domain-containing protein 1.